The chain runs to 252 residues: Hydroxyacylglutathione hydrolase (252 aa).

Zn(2+) is bound by residues H54, H56, D58, H59, H111, D128, and H166.

The protein belongs to the metallo-beta-lactamase superfamily. Glyoxalase II family. In terms of assembly, monomer. Requires Zn(2+) as cofactor.

The enzyme catalyses an S-(2-hydroxyacyl)glutathione + H2O = a 2-hydroxy carboxylate + glutathione + H(+). It functions in the pathway secondary metabolite metabolism; methylglyoxal degradation; (R)-lactate from methylglyoxal: step 2/2. In terms of biological role, thiolesterase that catalyzes the hydrolysis of S-D-lactoyl-glutathione to form glutathione and D-lactic acid. This is Hydroxyacylglutathione hydrolase from Vibrio parahaemolyticus serotype O3:K6 (strain RIMD 2210633).